The sequence spans 140 residues: Large ribosomal subunit protein uL11 (140 aa).

It belongs to the universal ribosomal protein uL11 family. In terms of assembly, part of the ribosomal stalk of the 50S ribosomal subunit. Interacts with L10 and the large rRNA to form the base of the stalk. L10 forms an elongated spine to which L12 dimers bind in a sequential fashion forming a multimeric L10(L12)X complex. In terms of processing, one or more lysine residues are methylated.

Its function is as follows. Forms part of the ribosomal stalk which helps the ribosome interact with GTP-bound translation factors. This Oleidesulfovibrio alaskensis (strain ATCC BAA-1058 / DSM 17464 / G20) (Desulfovibrio alaskensis) protein is Large ribosomal subunit protein uL11.